The sequence spans 370 residues: Glutamate 5-kinase (370 aa).

ATP is bound at residue K17. S56, D143, and N155 together coordinate substrate. Residue S175–D176 coordinates ATP. The region spanning K280–P357 is the PUA domain.

Belongs to the glutamate 5-kinase family.

It is found in the cytoplasm. The catalysed reaction is L-glutamate + ATP = L-glutamyl 5-phosphate + ADP. It participates in amino-acid biosynthesis; L-proline biosynthesis; L-glutamate 5-semialdehyde from L-glutamate: step 1/2. Catalyzes the transfer of a phosphate group to glutamate to form L-glutamate 5-phosphate. In Paracoccus denitrificans (strain Pd 1222), this protein is Glutamate 5-kinase.